The sequence spans 139 residues: Small ribosomal subunit protein uS12 (139 aa).

The interval 1 to 44 is disordered; that stretch reads MPTINQLVRKPRQSKITKSKSPALNKGYNSFKKSLTDVKSPQKR. Over residues 9 to 18 the composition is skewed to basic residues; sequence RKPRQSKITK. Residues 19–39 show a composition bias toward polar residues; that stretch reads SKSPALNKGYNSFKKSLTDVK. Asp102 bears the 3-methylthioaspartic acid mark.

This sequence belongs to the universal ribosomal protein uS12 family. Part of the 30S ribosomal subunit. Contacts proteins S8 and S17. May interact with IF1 in the 30S initiation complex.

With S4 and S5 plays an important role in translational accuracy. In terms of biological role, interacts with and stabilizes bases of the 16S rRNA that are involved in tRNA selection in the A site and with the mRNA backbone. Located at the interface of the 30S and 50S subunits, it traverses the body of the 30S subunit contacting proteins on the other side and probably holding the rRNA structure together. The combined cluster of proteins S8, S12 and S17 appears to hold together the shoulder and platform of the 30S subunit. This Lysinibacillus sphaericus (strain C3-41) protein is Small ribosomal subunit protein uS12.